The following is a 690-amino-acid chain: SWI/SNF-related matrix-associated actin-dependent regulator of chromatin subfamily A-like protein 1 homolog (690 aa).

The segment at 30–49 (MQAAANATASTSSAAPPAPP) is disordered. Low complexity predominate over residues 31–44 (QAAANATASTSSAA). The region spanning 92–170 (PTSLIKPTIG…AVKVELEPLP (79 aa)) is the HARP domain. The Helicase ATP-binding domain maps to 209–367 (IFALERDGRI…FTQIRLIDHK (159 aa)). 222 to 229 (DEMGLGKS) contacts ATP. The DESH box motif lies at 316–319 (DESH). The Nuclear localization signal signature appears at 411-428 (RRLKADVLKDLPEKRREV). The Helicase C-terminal domain maps to 482–639 (ILENYFYPDA…TFRTADKMHL (158 aa)).

It belongs to the SNF2/RAD54 helicase family. SMARCAL1 subfamily.

The protein resides in the nucleus. The enzyme catalyses ATP + H2O = ADP + phosphate + H(+). Its function is as follows. ATP-dependent annealing helicase that catalyzes the rewinding of the stably unwound DNA. The protein is SWI/SNF-related matrix-associated actin-dependent regulator of chromatin subfamily A-like protein 1 homolog of Caenorhabditis elegans.